The sequence spans 215 residues: Protein Nef (215 aa).

Gly-2 carries the N-myristoyl glycine; by host lipid modification. Position 6 is a phosphoserine; by host (Ser-6). The acidic; interacts with host PACS1 and PACS2; stabilizes the interaction of NEF/MHC-I with host AP1M1; necessary for MHC-I internalization stretch occupies residues Glu-71 to Glu-74. The tract at residues Pro-78–Pro-87 is SH3-binding; interaction with Src family tyrosine kinases. Positions Pro-81 to Pro-84 match the PxxP; stabilizes the interaction of NEF/MHC-I with host AP1M1; necessary for MHC-I internalization motif. The mediates dimerization, Nef-PTE1 interaction stretch occupies residues Glu-117 to Trp-133. The binding to ATP6V1H stretch occupies residues Val-157–Ile-189. A Dileucine internalization motif; necessary for CD4 internalization motif is present at residues Leu-173–Leu-174. Positions Glu-183–Asp-184 match the Diacidic; necessary for CD4 internalization motif.

The protein belongs to the lentivirus primate group Nef protein family. In terms of assembly, monomer; cytosolic form. Homodimer; membrane bound form. Interacts with Nef associated p21-activated kinase (PAK2); this interaction activates PAK2. Associates with the Nef-MHC-I-AP1 complex; this complex is required for MHC-I internalization. Interacts (via C-terminus) with host PI3-kinase. Interacts with host PACS1; this interaction seems to be weak. Interacts with host PACS2. Interacts with host LCK and MAPK3; these interactions inhibit the kinase activity of the latter. Interacts with host ATP6V1H; this interaction may play a role in CD4 endocytosis. Associates with the CD4-Nef-AP2 complex; this complex is required for CD4 internalization. Interacts with host AP2 subunit alpha and AP2 subunit sigma2. Interacts with TCR-zeta chain; this interaction up-regulates the Fas ligand (FasL) surface expression. Interacts with host HCK, LYN, and SRC; these interactions activate the Src family kinases. Interacts with MAP3K5; this interaction inhibits the Fas and TNFR-mediated death signals. Interacts with beta-COP and PTE1. Interacts with human RACK1; this increases Nef phosphorylation by PKC. Interacts with TP53; this interaction decreases the half-life of TP53, protecting the infected cell against p53-mediated apoptosis. The virion-associated Nef proteins are cleaved by the viral protease to release the soluble C-terminal core protein. Nef is probably cleaved concomitantly with viral structural proteins on maturation of virus particles. Post-translationally, myristoylated. In terms of processing, phosphorylated on serine residues, probably by host PKCdelta and theta.

The protein localises to the host cell membrane. It is found in the virion. Its subcellular location is the secreted. The protein resides in the host Golgi apparatus membrane. Its function is as follows. Factor of infectivity and pathogenicity, required for optimal virus replication. Alters numerous pathways of T-lymphocyte function and down-regulates immunity surface molecules in order to evade host defense and increase viral infectivity. Alters the functionality of other immunity cells, like dendritic cells, monocytes/macrophages and NK cells. In terms of biological role, in infected CD4(+) T-lymphocytes, down-regulates the surface MHC-I, mature MHC-II, CD4, CD28, CCR5 and CXCR4 molecules. Mediates internalization and degradation of host CD4 through the interaction of with the cytoplasmic tail of CD4, the recruitment of AP-2 (clathrin adapter protein complex 2), internalization through clathrin coated pits, and subsequent transport to endosomes and lysosomes for degradation. Diverts host MHC-I molecules to the trans-Golgi network-associated endosomal compartments by an endocytic pathway to finally target them for degradation. MHC-I down-regulation may involve AP-1 (clathrin adapter protein complex 1) or possibly Src family kinase-ZAP70/Syk-PI3K cascade recruited by PACS2. In consequence infected cells are masked for immune recognition by cytotoxic T-lymphocytes. Decreasing the number of immune receptors also prevents reinfection by more HIV particles (superinfection). Down-regulates host SERINC3 and SERINC5 thereby excluding these proteins from the viral particles. Virion infectivity is drastically higher when SERINC3 or SERINC5 are excluded from the viral envelope, because these host antiviral proteins impair the membrane fusion event necessary for subsequent virion penetration. Bypasses host T-cell signaling by inducing a transcriptional program nearly identical to that of anti-CD3 cell activation. Interaction with TCR-zeta chain up-regulates the Fas ligand (FasL). Increasing surface FasL molecules and decreasing surface MHC-I molecules on infected CD4(+) cells send attacking cytotoxic CD8+ T-lymphocytes into apoptosis. Functionally, plays a role in optimizing the host cell environment for viral replication without causing cell death by apoptosis. Protects the infected cells from apoptosis in order to keep them alive until the next virus generation is ready to strike. Inhibits the Fas and TNFR-mediated death signals by blocking MAP3K5/ASK1. Decreases the half-life of TP53, protecting the infected cell against p53-mediated apoptosis. Inhibits the apoptotic signals regulated by the Bcl-2 family proteins through the formation of a Nef/PI3-kinase/PAK2 complex that leads to activation of PAK2 and induces phosphorylation of host BAD. Its function is as follows. Extracellular Nef protein targets CD4(+) T-lymphocytes for apoptosis by interacting with CXCR4 surface receptors. This Human immunodeficiency virus type 1 group M subtype K (isolate 96CM-MP535) (HIV-1) protein is Protein Nef.